We begin with the raw amino-acid sequence, 331 residues long: Cytosolic Fe-S cluster assembly factor CFD1 (331 aa).

25-32 (GKGGVGKS) lines the ATP pocket. Positions 211 and 214 each coordinate [4Fe-4S] cluster.

It belongs to the Mrp/NBP35 ATP-binding proteins family. NUBP2/CFD1 subfamily. Heterotetramer of 2 NBP35 and 2 CFD1 chains. Requires [4Fe-4S] cluster as cofactor.

It is found in the cytoplasm. Functionally, component of the cytosolic iron-sulfur (Fe/S) protein assembly (CIA) machinery. Required for maturation of extramitochondrial Fe-S proteins. The NBP35-CFD1 heterotetramer forms a Fe-S scaffold complex, mediating the de novo assembly of an Fe-S cluster and its transfer to target apoproteins. The protein is Cytosolic Fe-S cluster assembly factor CFD1 of Cryptococcus neoformans var. neoformans serotype D (strain B-3501A) (Filobasidiella neoformans).